The sequence spans 296 residues: tRNA dimethylallyltransferase (296 aa).

An ATP-binding site is contributed by 9-16; it reads GPTAVGKT. 11-16 serves as a coordination point for substrate; it reads TAVGKT. Positions 34–37 are interaction with substrate tRNA; it reads DSRQ.

The protein belongs to the IPP transferase family. As to quaternary structure, monomer. It depends on Mg(2+) as a cofactor.

It catalyses the reaction adenosine(37) in tRNA + dimethylallyl diphosphate = N(6)-dimethylallyladenosine(37) in tRNA + diphosphate. Catalyzes the transfer of a dimethylallyl group onto the adenine at position 37 in tRNAs that read codons beginning with uridine, leading to the formation of N6-(dimethylallyl)adenosine (i(6)A). The chain is tRNA dimethylallyltransferase from Chloroflexus aurantiacus (strain ATCC 29366 / DSM 635 / J-10-fl).